The primary structure comprises 1374 residues: Alpha,alpha-trehalose-phosphate synthase [UDP-forming] 1 (1374 aa).

3 disordered regions span residues 28 to 66 (DTGK…SDKD), 86 to 117 (YTPG…DDEG), and 1352 to 1374 (KADS…SKQQ). 2 stretches are compositionally biased toward basic and acidic residues: residues 56 to 66 (DPFDRPKSDKD) and 86 to 95 (YTPGKEKGVD). Composition is skewed to acidic residues over residues 96–109 (QDES…EDHD) and 1356–1368 (YYDD…DQED).

The protein in the N-terminal section; belongs to the glycosyltransferase 20 family. This sequence in the C-terminal section; belongs to the gob-1 trehalose phosphatase family.

The enzyme catalyses D-glucose 6-phosphate + UDP-alpha-D-glucose = alpha,alpha-trehalose 6-phosphate + UDP + H(+). In terms of biological role, catalyzes the production of trehalose from glucose-6-phosphate and UDP-alpha-D-glucose in a 2 step process. This is Alpha,alpha-trehalose-phosphate synthase [UDP-forming] 1 (tps-1) from Caenorhabditis briggsae.